The sequence spans 461 residues: Bifunctional protein GlmU (461 aa).

The tract at residues 1 to 232 is pyrophosphorylase; it reads MNLQIIILAA…SFEVQGINNR (232 aa). UDP-N-acetyl-alpha-D-glucosamine contacts are provided by residues 8-11, K22, Q73, and 78-79; these read LAAG and GT. Residue D102 participates in Mg(2+) binding. Residues G142, E157, and N230 each contribute to the UDP-N-acetyl-alpha-D-glucosamine site. N230 contacts Mg(2+). The segment at 233 to 253 is linker; the sequence is QQLQQLERIWQQRAANQLMEK. The interval 254 to 461 is N-acetyltransferase; sequence GATLADANRF…WKRPVKRERD (208 aa). R336 and K354 together coordinate UDP-N-acetyl-alpha-D-glucosamine. The Proton acceptor role is filled by H366. Residues Y369 and N380 each coordinate UDP-N-acetyl-alpha-D-glucosamine. Residues A383, 389-390, S408, and A426 each bind acetyl-CoA; that span reads NY.

The protein in the N-terminal section; belongs to the N-acetylglucosamine-1-phosphate uridyltransferase family. This sequence in the C-terminal section; belongs to the transferase hexapeptide repeat family. Homotrimer. Mg(2+) serves as cofactor.

It localises to the cytoplasm. It carries out the reaction alpha-D-glucosamine 1-phosphate + acetyl-CoA = N-acetyl-alpha-D-glucosamine 1-phosphate + CoA + H(+). It catalyses the reaction N-acetyl-alpha-D-glucosamine 1-phosphate + UTP + H(+) = UDP-N-acetyl-alpha-D-glucosamine + diphosphate. Its pathway is nucleotide-sugar biosynthesis; UDP-N-acetyl-alpha-D-glucosamine biosynthesis; N-acetyl-alpha-D-glucosamine 1-phosphate from alpha-D-glucosamine 6-phosphate (route II): step 2/2. The protein operates within nucleotide-sugar biosynthesis; UDP-N-acetyl-alpha-D-glucosamine biosynthesis; UDP-N-acetyl-alpha-D-glucosamine from N-acetyl-alpha-D-glucosamine 1-phosphate: step 1/1. It participates in bacterial outer membrane biogenesis; LPS lipid A biosynthesis. In terms of biological role, catalyzes the last two sequential reactions in the de novo biosynthetic pathway for UDP-N-acetylglucosamine (UDP-GlcNAc). The C-terminal domain catalyzes the transfer of acetyl group from acetyl coenzyme A to glucosamine-1-phosphate (GlcN-1-P) to produce N-acetylglucosamine-1-phosphate (GlcNAc-1-P), which is converted into UDP-GlcNAc by the transfer of uridine 5-monophosphate (from uridine 5-triphosphate), a reaction catalyzed by the N-terminal domain. The sequence is that of Bifunctional protein GlmU from Legionella pneumophila subsp. pneumophila (strain Philadelphia 1 / ATCC 33152 / DSM 7513).